The following is a 277-amino-acid chain: Orotidine 5'-phosphate decarboxylase (277 aa).

Substrate contacts are provided by residues D40, 62-64 (KTH), 93-102 (DRKFIDIGNT), Y229, and R247. Residue K95 is the Proton donor of the active site.

This sequence belongs to the OMP decarboxylase family.

The enzyme catalyses orotidine 5'-phosphate + H(+) = UMP + CO2. Its pathway is pyrimidine metabolism; UMP biosynthesis via de novo pathway; UMP from orotate: step 2/2. The polypeptide is Orotidine 5'-phosphate decarboxylase (pyrG) (Aspergillus kawachii (White koji mold)).